Here is a 390-residue protein sequence, read N- to C-terminus: MLKFEILATDTSSHARRGKLTLNHGVVQTPIFMPVGTYGTVKGVMPRSLREMGAQIILGNTFHLWMRPGLDVMQSFGGLHGFEQWDKPILTDSGGFQVWSLGSMRKITEEGVHFASPVNGDKLFMSPEVSMQIQTTLNSDIVMQLDECTPYETNGHKTTEAEARKSMEMSRRWAVRSKNEFERLGNPNALFGIVQGGMYKNLRQESLEALVEMDFPGYAVGGVSVGEPKDEMLDIMAHTPHRLPAHKPRYLMGVGTPEDLVEGVAQGVDMFDCVMPTRNARNGTLFTRYGDLKIRNARHKTDHQPLDPSCTCHACAGTEGVSWNDGGRGGFSRAYLHHLDRCGEMLGPMLTTIHNLHYYLNLMREVREALDAGQFGAFRARFKAERARGV.

D92 (proton acceptor) is an active-site residue. Substrate-binding positions include 92–96 (DSGGF), D146, Q195, and G222. Residues 253 to 259 (GVGTPED) form an RNA binding region. The active-site Nucleophile is D272. Positions 277–281 (TRNAR) are RNA binding; important for wobble base 34 recognition. 4 residues coordinate Zn(2+): C310, C312, C315, and H354.

This sequence belongs to the queuine tRNA-ribosyltransferase family. As to quaternary structure, homodimer. Within each dimer, one monomer is responsible for RNA recognition and catalysis, while the other monomer binds to the replacement base PreQ1. Requires Zn(2+) as cofactor.

It carries out the reaction 7-aminomethyl-7-carbaguanine + guanosine(34) in tRNA = 7-aminomethyl-7-carbaguanosine(34) in tRNA + guanine. It participates in tRNA modification; tRNA-queuosine biosynthesis. Its function is as follows. Catalyzes the base-exchange of a guanine (G) residue with the queuine precursor 7-aminomethyl-7-deazaguanine (PreQ1) at position 34 (anticodon wobble position) in tRNAs with GU(N) anticodons (tRNA-Asp, -Asn, -His and -Tyr). Catalysis occurs through a double-displacement mechanism. The nucleophile active site attacks the C1' of nucleotide 34 to detach the guanine base from the RNA, forming a covalent enzyme-RNA intermediate. The proton acceptor active site deprotonates the incoming PreQ1, allowing a nucleophilic attack on the C1' of the ribose to form the product. After dissociation, two additional enzymatic reactions on the tRNA convert PreQ1 to queuine (Q), resulting in the hypermodified nucleoside queuosine (7-(((4,5-cis-dihydroxy-2-cyclopenten-1-yl)amino)methyl)-7-deazaguanosine). In Acidovorax sp. (strain JS42), this protein is Queuine tRNA-ribosyltransferase.